Here is a 408-residue protein sequence, read N- to C-terminus: Peptidase T (408 aa).

Residue H78 coordinates Zn(2+). D80 is a catalytic residue. D141 contacts Zn(2+). The Proton acceptor role is filled by E175. The Zn(2+) site is built by E176, D198, and H380.

The protein belongs to the peptidase M20B family. Zn(2+) is required as a cofactor.

The protein localises to the cytoplasm. The enzyme catalyses Release of the N-terminal residue from a tripeptide.. Functionally, cleaves the N-terminal amino acid of tripeptides. This Clostridium botulinum (strain Langeland / NCTC 10281 / Type F) protein is Peptidase T.